We begin with the raw amino-acid sequence, 375 residues long: Protein RecA (375 aa).

Residue 75 to 82 (GPESSGKT) participates in ATP binding. The interval 339-375 (GPYAKMKDEQTEEAAGDQMDEDKPIDLSPNFDDDDAN) is disordered. The segment covering 348-358 (QTEEAAGDQMD) has biased composition (acidic residues).

Belongs to the RecA family.

It localises to the cytoplasm. Its function is as follows. Can catalyze the hydrolysis of ATP in the presence of single-stranded DNA, the ATP-dependent uptake of single-stranded DNA by duplex DNA, and the ATP-dependent hybridization of homologous single-stranded DNAs. It interacts with LexA causing its activation and leading to its autocatalytic cleavage. This Corynebacterium jeikeium (strain K411) protein is Protein RecA.